Here is a 252-residue protein sequence, read N- to C-terminus: Imidazole glycerol phosphate synthase subunit HisF (252 aa).

Active-site residues include Asp11 and Asp130.

The protein belongs to the HisA/HisF family. Heterodimer of HisH and HisF.

Its subcellular location is the cytoplasm. It catalyses the reaction 5-[(5-phospho-1-deoxy-D-ribulos-1-ylimino)methylamino]-1-(5-phospho-beta-D-ribosyl)imidazole-4-carboxamide + L-glutamine = D-erythro-1-(imidazol-4-yl)glycerol 3-phosphate + 5-amino-1-(5-phospho-beta-D-ribosyl)imidazole-4-carboxamide + L-glutamate + H(+). It functions in the pathway amino-acid biosynthesis; L-histidine biosynthesis; L-histidine from 5-phospho-alpha-D-ribose 1-diphosphate: step 5/9. In terms of biological role, IGPS catalyzes the conversion of PRFAR and glutamine to IGP, AICAR and glutamate. The HisF subunit catalyzes the cyclization activity that produces IGP and AICAR from PRFAR using the ammonia provided by the HisH subunit. In Staphylococcus aureus (strain Mu3 / ATCC 700698), this protein is Imidazole glycerol phosphate synthase subunit HisF.